Reading from the N-terminus, the 388-residue chain is Succinate--CoA ligase [ADP-forming] subunit beta (388 aa).

The region spanning 9–244 (KQLFARYGLP…QSQEDPREAQ (236 aa)) is the ATP-grasp domain. Residues lysine 46, 53 to 55 (GRG), glutamate 99, threonine 102, and glutamate 107 each bind ATP. Mg(2+) is bound by residues asparagine 199 and aspartate 213. Residues asparagine 264 and 321-323 (GIV) each bind substrate.

The protein belongs to the succinate/malate CoA ligase beta subunit family. As to quaternary structure, heterotetramer of two alpha and two beta subunits. Requires Mg(2+) as cofactor.

It catalyses the reaction succinate + ATP + CoA = succinyl-CoA + ADP + phosphate. The enzyme catalyses GTP + succinate + CoA = succinyl-CoA + GDP + phosphate. The protein operates within carbohydrate metabolism; tricarboxylic acid cycle; succinate from succinyl-CoA (ligase route): step 1/1. Its function is as follows. Succinyl-CoA synthetase functions in the citric acid cycle (TCA), coupling the hydrolysis of succinyl-CoA to the synthesis of either ATP or GTP and thus represents the only step of substrate-level phosphorylation in the TCA. The beta subunit provides nucleotide specificity of the enzyme and binds the substrate succinate, while the binding sites for coenzyme A and phosphate are found in the alpha subunit. This Escherichia coli O8 (strain IAI1) protein is Succinate--CoA ligase [ADP-forming] subunit beta.